A 260-amino-acid polypeptide reads, in one-letter code: HTH-type transcriptional repressor NanR (260 aa).

An HTH gntR-type domain is found at 27–95; that stretch reads KKLSEMVEEE…NGERARVSRP (69 aa). Residues 55 to 74 constitute a DNA-binding region (H-T-H motif); sequence ERELMAFFNVGRPSVREALA.

It belongs to the NanR family.

In terms of biological role, transcriptional repressor that controls expression of the genes required for the catabolism of sialic acids. The sequence is that of HTH-type transcriptional repressor NanR from Citrobacter rodentium (strain ICC168) (Citrobacter freundii biotype 4280).